Here is a 68-residue protein sequence, read N- to C-terminus: Large ribosomal subunit protein uL29 (68 aa).

The protein belongs to the universal ribosomal protein uL29 family.

This Streptococcus thermophilus (strain ATCC BAA-250 / LMG 18311) protein is Large ribosomal subunit protein uL29.